We begin with the raw amino-acid sequence, 118 residues long: Evasin P1080 (118 aa).

Residues 1–19 form the signal peptide; sequence FFQLAVFVVILFNINLLSA. Intrachain disulfides connect C41-C60, C45-C62, and C56-C73. The N-linked (GlcNAc...) asparagine glycan is linked to N44. N-linked (GlcNAc...) asparagine glycosylation is found at N67 and N104.

Its subcellular location is the secreted. Its function is as follows. Salivary chemokine-binding protein which binds to host chemokines CXCL1, CXCL2, CXCL3, CXCL4, CXCL5, CXCL6, CXCL10, CXCL11 and CXCL13. The chain is Evasin P1080 from Ixodes ricinus (Common tick).